The following is a 300-amino-acid chain: Homoserine kinase (300 aa).

82 to 92 lines the ATP pocket; it reads RPGSGLGSSAA.

The protein belongs to the GHMP kinase family. Homoserine kinase subfamily.

Its subcellular location is the cytoplasm. The enzyme catalyses L-homoserine + ATP = O-phospho-L-homoserine + ADP + H(+). Its pathway is amino-acid biosynthesis; L-threonine biosynthesis; L-threonine from L-aspartate: step 4/5. In terms of biological role, catalyzes the ATP-dependent phosphorylation of L-homoserine to L-homoserine phosphate. The sequence is that of Homoserine kinase from Methanocella arvoryzae (strain DSM 22066 / NBRC 105507 / MRE50).